The sequence spans 689 residues: Glycine--tRNA ligase beta subunit (689 aa).

Belongs to the class-II aminoacyl-tRNA synthetase family. As to quaternary structure, tetramer of two alpha and two beta subunits.

It localises to the cytoplasm. The catalysed reaction is tRNA(Gly) + glycine + ATP = glycyl-tRNA(Gly) + AMP + diphosphate. This Salmonella heidelberg (strain SL476) protein is Glycine--tRNA ligase beta subunit.